A 128-amino-acid chain; its full sequence is Small ribosomal subunit protein uS9 (128 aa).

Belongs to the universal ribosomal protein uS9 family.

This is Small ribosomal subunit protein uS9 from Christiangramia forsetii (strain DSM 17595 / CGMCC 1.15422 / KT0803) (Gramella forsetii).